The primary structure comprises 441 residues: Mitochondrial inner membrane protein OXA1L (441 aa).

Topologically, residues 1–113 (MALALMCGRR…QAAAEQSFAE (113 aa)) are mitochondrial intermembrane. Residues 114-134 (LGLGSYTPVGLIQNLLEFMHV) traverse the membrane as a helical segment. Over 135–139 (NLGLP) the chain is Mitochondrial matrix. The chain crosses the membrane as a helical span at residues 140 to 160 (WWGAIAACTVLARCLVFPLIV). Topologically, residues 161 to 212 (KGQREAAKIHNHLPEIQKFSARIREAKLTGNHTEFYRASSEMTFYQKKHDIK) are mitochondrial intermembrane. A helical membrane pass occupies residues 213 to 233 (LFRPLILPLTQAPIFISFFIA). The Mitochondrial matrix portion of the chain corresponds to 234-260 (LREMANLPVPSLQTGGLWWFQDLTLSD). Residues 261 to 281 (PIYVLPLVVTATMWGVLELGA) traverse the membrane as a helical segment. Residues 282–298 (ETGMQSSDLQWMRNFIR) are Mitochondrial intermembrane-facing. A helical membrane pass occupies residues 299–319 (LMPLAVLPITIHFPTAVFMYW). The Mitochondrial matrix portion of the chain corresponds to 320 to 441 (LSSNMFSLGQ…SKQPWRDTLG (122 aa)). A Phosphoserine modification is found at Ser-364. Thr-400 carries the phosphothreonine modification. The segment at 405–441 (PLLQHGKNDPPNTPNSSSSSSSSNKAKSKQPWRDTLG) is disordered. Positions 418 to 429 (PNSSSSSSSSNK) are enriched in low complexity.

It belongs to the OXA1/ALB3/YidC family. As to quaternary structure, monomer; predominantly monomeric at low salt concentrations. Homooligomer; predominantly homooligomeric at high salt concentrations. Associates with the mitochondrial ribosome. Associates preferentially as a dimer with the large ribosomal subunit 39S of the mitochondrial ribosome. Interacts with OXA1L; promoting cotranslational quality control in mitochondria.

Its subcellular location is the mitochondrion inner membrane. Mitochondrial membrane insertase that mediates the cotranslational insertion of integral membrane proteins into the mitochondrial inner membrane. Essential for the activity and assembly of cytochrome oxidase. Required for the correct biogenesis of ATP synthase and complex I in mitochondria. The chain is Mitochondrial inner membrane protein OXA1L (OXA1L) from Bos taurus (Bovine).